Here is a 595-residue protein sequence, read N- to C-terminus: MSLAFNPAATAFSGNGARSRRENFPVKHVTVRGFPMITNKSSFAVKCNLTTTDLMGKIAEKFKGEDSNFPAAAAVQPAADMPSNLCIIDTLQRLGVDRYFRSEIDTILEDTYRLWQRKERAIFSDTAIHAMAFRLLRVKGYEVSSEELAPYADQEHVDLQTIEVATVIELYRAAQERTGEDESSLKKLHAWTTTFLKQKLLTNSIPDKKLHKLVEYYLKNXHGILDRMGVRQNLDLYDISYYRTSKAANRFSNLCSEDFLAFARQDFNICQAQHQKELQQLQRWYADCKLDTLKYGRDVVRVANFLTSAIIGDPELSDVRIVFAQHIVLVTRIDDFFDHRGSREESYKILELIKEWKEKPAAEYGSEEVEILFTAVYNTVNELAERAHVEQGRSVKDFLIKLWVQILSIFKRELDTWSDDTALTLDDYLSASWVSIGCRICILMSMQFIGIKLSDEMLLSEECIDLCRHVSMVDRLLNDVQTFEKERKENTGNSVTLLLAANKDDSSFTEEEAIRIAKEMAECNRRQLMQIVYKTGTIFPRQCKDMFLKVCRIGCYLYASGDEFTSPQQMMEDMKSLVYEPLTIHPLVANNVRGK.

The transit peptide at methionine 1–cysteine 47 directs the protein to the chloroplast. 4 residues coordinate Mg(2+): aspartate 334, aspartate 338, asparagine 478, and glutamate 486. A DDXXD motif motif is present at residues aspartate 334–aspartate 338.

The protein belongs to the terpene synthase family. The cofactor is Mg(2+).

The protein resides in the plastid. It localises to the chloroplast. It catalyses the reaction (+)-copalyl diphosphate = miltiradiene + diphosphate. Its pathway is secondary metabolite biosynthesis; terpenoid biosynthesis. Involved in tanshinone biosynthesis in hairy roots. Catalyzes the conversion of copalyl diphosphate (CPP) to miltiradiene. The sequence is that of Miltiradiene synthase KSL1, chloroplastic from Salvia miltiorrhiza (Chinese sage).